We begin with the raw amino-acid sequence, 507 residues long: ATP synthase subunit alpha, chloroplastic (507 aa).

Position 170–177 (170–177) interacts with ATP; sequence GDRQTGKT.

This sequence belongs to the ATPase alpha/beta chains family. As to quaternary structure, F-type ATPases have 2 components, CF(1) - the catalytic core - and CF(0) - the membrane proton channel. CF(1) has five subunits: alpha(3), beta(3), gamma(1), delta(1), epsilon(1). CF(0) has four main subunits: a, b, b' and c.

Its subcellular location is the plastid. It is found in the chloroplast thylakoid membrane. The enzyme catalyses ATP + H2O + 4 H(+)(in) = ADP + phosphate + 5 H(+)(out). Produces ATP from ADP in the presence of a proton gradient across the membrane. The alpha chain is a regulatory subunit. This chain is ATP synthase subunit alpha, chloroplastic, found in Phalaenopsis aphrodite subsp. formosana (Moth orchid).